The chain runs to 526 residues: Phosphoenolpyruvate carboxykinase (ATP) (526 aa).

3 residues coordinate substrate: R55, Y190, and K196. ATP-binding positions include K196, H215, and 231–239 (GLSGTGKTT). K196 and H215 together coordinate Mn(2+). Residue D252 participates in Mn(2+) binding. Positions 280, 317, and 442 each coordinate ATP. Residue R317 coordinates substrate.

This sequence belongs to the phosphoenolpyruvate carboxykinase (ATP) family. It depends on Mn(2+) as a cofactor.

Its subcellular location is the cytoplasm. It catalyses the reaction oxaloacetate + ATP = phosphoenolpyruvate + ADP + CO2. It functions in the pathway carbohydrate biosynthesis; gluconeogenesis. Its function is as follows. Involved in the gluconeogenesis. Catalyzes the conversion of oxaloacetate (OAA) to phosphoenolpyruvate (PEP) through direct phosphoryl transfer between the nucleoside triphosphate and OAA. This is Phosphoenolpyruvate carboxykinase (ATP) from Alkaliphilus oremlandii (strain OhILAs) (Clostridium oremlandii (strain OhILAs)).